Reading from the N-terminus, the 156-residue chain is MSNQTVSELKDLTAKSATNYGFDVTDFKMFTHLNPLSIQVNIRHKNPDKKVTIDDCSILSQYIDEAIQGSSILDQPFNLEISSEGISDFLTEEKDFQTFKGFPVEVSYQDLKKIEQQTNGLLLKRTDNELQINQKGKTQRIPVEDVIQVRLTTPAG.

The protein belongs to the RimP family.

Its subcellular location is the cytoplasm. Required for maturation of 30S ribosomal subunits. The sequence is that of Ribosome maturation factor RimP from Prochlorococcus marinus (strain NATL1A).